The primary structure comprises 289 residues: Acetyl-coenzyme A carboxylase carboxyl transferase subunit beta (289 aa).

The region spanning 28 to 289 is the CoA carboxyltransferase N-terminal domain; it reads VMTKCPKCKK…QGGEMAVWQS (262 aa). C32, C35, C51, and C54 together coordinate Zn(2+). A C4-type zinc finger spans residues 32–54; sequence CPKCKKIMYTKEVLKNLKVCVNC.

The protein belongs to the AccD/PCCB family. In terms of assembly, acetyl-CoA carboxylase is a heterohexamer composed of biotin carboxyl carrier protein (AccB), biotin carboxylase (AccC) and two subunits each of ACCase subunit alpha (AccA) and ACCase subunit beta (AccD). Zn(2+) is required as a cofactor.

Its subcellular location is the cytoplasm. The enzyme catalyses N(6)-carboxybiotinyl-L-lysyl-[protein] + acetyl-CoA = N(6)-biotinyl-L-lysyl-[protein] + malonyl-CoA. It functions in the pathway lipid metabolism; malonyl-CoA biosynthesis; malonyl-CoA from acetyl-CoA: step 1/1. In terms of biological role, component of the acetyl coenzyme A carboxylase (ACC) complex. Biotin carboxylase (BC) catalyzes the carboxylation of biotin on its carrier protein (BCCP) and then the CO(2) group is transferred by the transcarboxylase to acetyl-CoA to form malonyl-CoA. In Bacillus thuringiensis subsp. konkukian (strain 97-27), this protein is Acetyl-coenzyme A carboxylase carboxyl transferase subunit beta.